We begin with the raw amino-acid sequence, 1408 residues long: Palladin (1408 aa).

The interval 69 to 229 (SKSPISLCET…SASQSPTADQ (161 aa)) is disordered. Polar residues-rich tracts occupy residues 149 to 169 (PNPS…QSQL) and 193 to 229 (RSPN…TADQ). S194 carries the phosphoserine modification. Ig-like C2-type domains lie at 278-367 (PRFI…AEVF) and 448-546 (PVFT…LVIT). 2 disulfides stabilise this stretch: C299/C351 and C469/C528. Residues 569-573 (FPPPP) are interaction with VASP. 2 disordered regions span residues 631–660 (NGKA…LAKP) and 687–727 (PPGV…VPSE). S639 carries the phosphoserine modification. T642 carries the phosphothreonine modification. S648 is subject to Phosphoserine. The tract at residues 653 to 683 (PPPLLAKPKLDPLKLQQLQNQVRLEQEACAW) is interaction with LASP1. An interaction with SORBS2, SPIN90 and SRC region spans residues 683 to 713 (WPPAPPGVPCNSSSSGSSAPPSPPFPPPPPA). Positions 691-701 (PCNSSSSGSSA) are enriched in low complexity. S700, S704, and S744 each carry phosphoserine. Residues 702-714 (PPSPPFPPPPPAF) show a composition bias toward pro residues. Disordered stretches follow at residues 758–854 (NLGP…RFGP), 882–904 (KGVT…SDEE), and 960–981 (ETAA…LDGQ). The span at 765–779 (LPTPTSSPSSSSLPS) shows a compositional bias: low complexity. 3 stretches are compositionally biased toward pro residues: residues 780–797 (PLSP…PPFV), 807–818 (SPSPPPPPPPVF), and 828–840 (DVFP…PPLP). Residues 782–842 (SPTPRPFGRA…PPPPPPLPSS (61 aa)) are interaction with EPS8. The tract at residues 807 to 842 (SPSPPPPPPPVFSPSAAYPVPDVFPLPPPPPPLPSS) is interaction with SORBS2, SPIN90, SRC and PFN1. The segment at 830–834 (FPLPP) is interaction with VASP. At S901 the chain carries Phosphoserine. S1004 and S1009 each carry phosphoserine. The Ig-like C2-type 3 domain maps to 1026–1110 (PFFEMKLKHY…MAANPQGRVS (85 aa)). Residues 1121–1150 (NQRGRSPRSPSGHPHARRPRSRSRDSGDEN) are disordered. The segment covering 1123 to 1133 (RGRSPRSPSGH) has biased composition (low complexity). Phosphoserine is present on residues S1126, S1129, S1131, and S1141. The residue at position 1143 (S1143) is a Phosphoserine; by PKB/AKT1. A Phosphoserine modification is found at S1146. Ig-like C2-type domains follow at residues 1160-1251 (PHFL…LVVA) and 1259-1349 (PVFM…ARLD). 2 interaction with EZR regions span residues 1162–1251 (FLQA…LVVA) and 1261–1351 (FMEK…LDVY). An intrachain disulfide couples C1181 to C1233. Position 1377 is a phosphoserine (S1377).

Belongs to the myotilin/palladin family. Interacts with EPS8. Interacts with LASP1. Interacts with VASP. Interacts with ACTN. Interacts with SORBS2. Interacts with PFN1. Interacts with LPP. Interacts with SPIN90. Interacts with SRC. Interacts with EZR. Interacts with RAI14. In terms of processing, phosphorylated predominantly on serines and, to a lesser extent, on tyrosines. Phosphorylation at Ser-1143 by PKB/AKT1 modulates cytoskeletal organization and cell motility. Detected in both muscle and non-muscle tissues and cells (at protein level). Isoform 3 is widely expressed, isoform 4 is particularly abundant in tissues rich in smooth muscle and in the cardiac muscle and isoform 1 is detected in heart.

Its subcellular location is the cytoplasm. It is found in the cytoskeleton. The protein resides in the cell junction. It localises to the focal adhesion. The protein localises to the myofibril. Its subcellular location is the sarcomere. It is found in the z line. The protein resides in the cell projection. It localises to the ruffle. The protein localises to the podosome. Its subcellular location is the lamellipodium. It is found in the axon. The protein resides in the growth cone. In terms of biological role, cytoskeletal protein required for organization of normal actin cytoskeleton. Roles in establishing cell morphology, motility, cell adhesion and cell-extracellular matrix interactions in a variety of cell types. May function as a scaffolding molecule with the potential to influence both actin polymerization and the assembly of existing actin filaments into higher-order arrays. Binds to proteins that bind to either monomeric or filamentous actin. Localizes at sites where active actin remodeling takes place, such as lamellipodia and membrane ruffles. Different isoforms may have functional differences. Involved in the control of morphological and cytoskeletal changes associated with dendritic cell maturation. Involved in targeting ACTN to specific subcellular locations. May be required for the initiation of neural tube closure. The protein is Palladin (Palld) of Mus musculus (Mouse).